Reading from the N-terminus, the 160-residue chain is Protein-export protein SecB (160 aa).

The protein belongs to the SecB family. In terms of assembly, homotetramer, a dimer of dimers. One homotetramer interacts with 1 SecA dimer.

It is found in the cytoplasm. Its function is as follows. One of the proteins required for the normal export of preproteins out of the cell cytoplasm. It is a molecular chaperone that binds to a subset of precursor proteins, maintaining them in a translocation-competent state. It also specifically binds to its receptor SecA. The polypeptide is Protein-export protein SecB (Burkholderia lata (strain ATCC 17760 / DSM 23089 / LMG 22485 / NCIMB 9086 / R18194 / 383)).